Consider the following 621-residue polypeptide: Uptake hydrogenase large subunit (621 aa).

Residues cysteine 75, cysteine 78, cysteine 600, and cysteine 603 each contribute to the Ni(2+) site.

The protein belongs to the [NiFe]/[NiFeSe] hydrogenase large subunit family. In terms of assembly, heterodimer of a large and a small subunit. Ni(2+) serves as cofactor.

Its subcellular location is the cell membrane. The enzyme catalyses H2 + A = AH2. Functionally, this enzyme recycles the H(2) produced by nitrogenase to increase the production of ATP and to protect nitrogenase against inhibition or damage by O(2) under carbon- or phosphate-limited conditions. This chain is Uptake hydrogenase large subunit (hupL), found in Alcaligenes hydrogenophilus.